We begin with the raw amino-acid sequence, 323 residues long: tRNA dimethylallyltransferase (323 aa).

Position 12-19 (12-19) interacts with ATP; the sequence is GPTAAGKT. A substrate-binding site is contributed by 14 to 19; sequence TAAGKT. 2 interaction with substrate tRNA regions span residues 37-40 and 161-165; these read DSAL and QRLSR.

It belongs to the IPP transferase family. As to quaternary structure, monomer. The cofactor is Mg(2+).

It carries out the reaction adenosine(37) in tRNA + dimethylallyl diphosphate = N(6)-dimethylallyladenosine(37) in tRNA + diphosphate. In terms of biological role, catalyzes the transfer of a dimethylallyl group onto the adenine at position 37 in tRNAs that read codons beginning with uridine, leading to the formation of N6-(dimethylallyl)adenosine (i(6)A). The sequence is that of tRNA dimethylallyltransferase from Pseudomonas fluorescens (strain SBW25).